A 170-amino-acid chain; its full sequence is MSLHTENSQPSIGVYPGTFDPITNGHIDIIERALALFDTVIVAIAVNGQKQPLFSGEERKEMIEKCFEKEKGRIIVKIVPSGLLVNFAVEQGARAIIRGLRAVSDFDYEFQLALMNRKLVREVESIFLMTAFRWIYISSSLIKDVSKNGGDISDLVPKHVERLLEEKYRP.

Residue T18 coordinates substrate. Residues 18–19 and H26 contribute to the ATP site; that span reads TF. Residues K50, L84, and R98 each contribute to the substrate site. ATP contacts are provided by residues 99–101, E109, and 134–140; these read GLR and WIYISSS.

This sequence belongs to the bacterial CoaD family. Homohexamer. Requires Mg(2+) as cofactor.

It is found in the cytoplasm. The enzyme catalyses (R)-4'-phosphopantetheine + ATP + H(+) = 3'-dephospho-CoA + diphosphate. The protein operates within cofactor biosynthesis; coenzyme A biosynthesis; CoA from (R)-pantothenate: step 4/5. Its function is as follows. Reversibly transfers an adenylyl group from ATP to 4'-phosphopantetheine, yielding dephospho-CoA (dPCoA) and pyrophosphate. This Desulfotalea psychrophila (strain LSv54 / DSM 12343) protein is Phosphopantetheine adenylyltransferase.